A 195-amino-acid polypeptide reads, in one-letter code: MLTEKFDNLVKQLRVLPGVGQKTAQRMALHLLNGRRGQGSALAQALDIAMHEIIECRQCHSFSDDDICPICVDPRRDDSVLCVVETAADVMAIEQAAGYRGRYFVLGGHLSPLDGINADDLNIDQLVNRVKTAPVDEIILATSTTVEGQTTAHFIAEAVRRHVGKVTRIAQGIPMGGELEYLDSMTLSQALQNRS.

A C4-type zinc finger spans residues 56 to 71 (CRQCHSFSDDDICPIC). Residues 79-174 (SVLCVVETAA…KVTRIAQGIP (96 aa)) enclose the Toprim domain.

This sequence belongs to the RecR family.

May play a role in DNA repair. It seems to be involved in an RecBC-independent recombinational process of DNA repair. It may act with RecF and RecO. In Psychrobacter sp. (strain PRwf-1), this protein is Recombination protein RecR.